The sequence spans 660 residues: UPF0603 protein MT2410 (660 aa).

A signal peptide spans 1 to 26 (MRLVRLLGMVLTILAAGLLLGPPAGA). A helical transmembrane segment spans residues 162-182 (VVLLVTVGIIVIVVAVLLVVM). The stretch at 488 to 567 (DQLTKVDADL…LEAAHDRKSS (80 aa)) forms a coiled coil. Residues 605–625 (GGNNAGAILGGIIIGDLLSGG) traverse the membrane as a helical segment. The tract at residues 638–660 (FGGSSNAPGSSPDGGFLGGGGRF) is disordered.

Belongs to the UPF0603 family.

Its subcellular location is the cell membrane. Functionally, may play a role in septum formation. This Mycobacterium tuberculosis (strain CDC 1551 / Oshkosh) protein is UPF0603 protein MT2410.